We begin with the raw amino-acid sequence, 323 residues long: MSRNDLSSAPSSSAAPPARILLVTGLSGAGKSTALRTFEDMGWETVDNLPLSLLERLILTPPSSVAAYKGRPLALGIDSRTRGFTVDAFLKGVEQLRQHHSQPIDILFLDCSDSELMRRFDTTRRRHPLALDRPMEDGISEERAFLAPVREIADFLIDTTTTSSHSLQSELRQQFAPENSVAPNVSILSFGFSRGIPRNCDLLFDMRFLQNPYWEEALRPLTGLDPEIADYIEQDPSFLPAVTKIKDLLLFLLPRYIDTGKSYIVIAFACTGGRHRSVYVAEWIAARLRQAHFSLTITHRDLKLPLLESQSNRIRAGKAYQGG.

25–32 (GLSGAGKS) contacts ATP. GTP is bound at residue 78–81 (DSRT).

It belongs to the RapZ-like family.

In terms of biological role, displays ATPase and GTPase activities. The polypeptide is Nucleotide-binding protein ZMO1325 (Zymomonas mobilis subsp. mobilis (strain ATCC 31821 / ZM4 / CP4)).